The primary structure comprises 635 residues: 1-deoxy-D-xylulose-5-phosphate synthase (635 aa).

Thiamine diphosphate contacts are provided by residues histidine 78 and glycine 119–alanine 121. Residue aspartate 150 coordinates Mg(2+). Residues glycine 151–serine 152, asparagine 179, phenylalanine 291, and glutamate 376 contribute to the thiamine diphosphate site. Asparagine 179 contributes to the Mg(2+) binding site.

This sequence belongs to the transketolase family. DXPS subfamily. Homodimer. Requires Mg(2+) as cofactor. Thiamine diphosphate serves as cofactor.

The enzyme catalyses D-glyceraldehyde 3-phosphate + pyruvate + H(+) = 1-deoxy-D-xylulose 5-phosphate + CO2. Its pathway is metabolic intermediate biosynthesis; 1-deoxy-D-xylulose 5-phosphate biosynthesis; 1-deoxy-D-xylulose 5-phosphate from D-glyceraldehyde 3-phosphate and pyruvate: step 1/1. Its function is as follows. Catalyzes the acyloin condensation reaction between C atoms 2 and 3 of pyruvate and glyceraldehyde 3-phosphate to yield 1-deoxy-D-xylulose-5-phosphate (DXP). The chain is 1-deoxy-D-xylulose-5-phosphate synthase from Chlorobaculum tepidum (strain ATCC 49652 / DSM 12025 / NBRC 103806 / TLS) (Chlorobium tepidum).